Consider the following 156-residue polypeptide: Maintenance of carboxysome distribution protein B (156 aa).

The tract at residues 1 to 55 (MSNNALDRLINKQKPKVPPRNDVVSESVSNDIKTQGQQELNTSLPPSDTKATPEE) is required for interaction with McdA:DNA complex. A disordered region spans residues 1-79 (MSNNALDRLI…QKPKLSPDTF (79 aa)). The span at 24–50 (VSESVSNDIKTQGQQELNTSLPPSDTK) shows a compositional bias: polar residues. A compositionally biased stretch (basic and acidic residues) spans 51–63 (ATPEEMPTSHESE). Residues 122–156 (PEELAQVIQLAQERLSQRKAIADYKRAKTMQERFL) adopt a coiled-coil conformation.

In terms of assembly, homodimerizes; may exist in higher order oligomers in solution. Forms a complex with McdA:DNA. Homohexamerizes, interacts with shell components of the carboxysome.

It is found in the carboxysome. McdA and McdB together mediate carboxysome (Cb) spacing, size, ultrastructure and probably inheritance in the cell, together they prevent Cb aggregation. McdA is an ATPase that forms dynamic gradients on the nucleoid in response to adapter protein McdB, which associates with carboxysomes. The interplay between McdA gradients on the nucleoid and McdB-bound carboxysomes result in the equal spacing of Cbs along the cell length. Stimulates the ATPase activity of McdA, causing McdA to be released from DNA. Undergoes liquid-liquid phase separation. Its function is as follows. Incorrect positioning (aggregation) of carboxysomes results in reduced CO(2) fixation by encapsulated ribulose-1,5-bisphosphate carboxylase (RuBisCO, cbbL/cbbS), which leads to slower growth. In Gloeothece citriformis (strain PCC 7424) (Cyanothece sp. (strain PCC 7424)), this protein is Maintenance of carboxysome distribution protein B.